The following is a 520-amino-acid chain: Solute carrier family 2, facilitated glucose transporter member 14 (520 aa).

The Cytoplasmic segment spans residues 1–29; the sequence is MEFHNGGHVSGIGGFLVSLTSRMKPHTLA. A helical membrane pass occupies residues 30–50; that stretch reads VTPALIFAITVATIGSFQFGY. Over 51–88 the chain is Extracellular; it reads NTGVINAPETIIKEFINKTLTDKANAPPSEVLLTNLWS. N67 is a glycosylation site (N-linked (GlcNAc...) asparagine). The helical transmembrane segment at 89–109 threads the bilayer; that stretch reads LSVAIFSVGGMIGSFSVGLFV. Over 110–117 the chain is Cytoplasmic; the sequence is NRFGRRNS. Residues 118–138 traverse the membrane as a helical segment; the sequence is MLIVNLLAATGGCLMGLCKIA. The Extracellular portion of the chain corresponds to 139 to 148; that stretch reads ESVEMLILGR. Residues 149–169 form a helical membrane-spanning segment; sequence LVIGLFCGLCTGFVPMYIGEI. At 170 to 177 the chain is on the cytoplasmic side; sequence SPTALRGA. The chain crosses the membrane as a helical span at residues 178 to 198; the sequence is FGTLNQLGIVIGILVAQIFGL. Q183 is a binding site for D-glucose. The Extracellular segment spans residues 199–207; the sequence is ELILGSEEL. Residues 208–228 traverse the membrane as a helical segment; that stretch reads WPVLLGFTILPAILQSAALPC. At 229-293 the chain is on the cytoplasmic side; it reads CPESPRFLLI…LFRVSSYRQP (65 aa). The helical transmembrane segment at 294 to 314 threads the bilayer; it reads IIISIVLQLSQQLSGINAVFY. D-glucose contacts are provided by residues 304–305 and N310; that span reads QQ. Topologically, residues 315–328 are extracellular; that stretch reads YSTGIFKDAGVQQP. A helical membrane pass occupies residues 329–349; the sequence is IYATISAGVVNTIFTLLSLFL. N339 lines the D-glucose pocket. At 350–358 the chain is on the cytoplasmic side; the sequence is VERAGRRTL. The helical transmembrane segment at 359–379 threads the bilayer; that stretch reads HMIGLGGMAFCSTLMTVSLLL. Over 380 to 392 the chain is Extracellular; that stretch reads KNHYNGMSFVCIG. A helical transmembrane segment spans residues 393 to 413; that stretch reads AILVFVACFEIGPGPIPWFIV. Positions 402 and 410 each coordinate D-glucose. Over 414–423 the chain is Cytoplasmic; that stretch reads AELFSQGPRP. Residues 424–444 traverse the membrane as a helical segment; that stretch reads AAMAVAGCSNWTSNFLVGLLF. The Extracellular segment spans residues 445 to 451; sequence PSAAYYL. Residues 452–472 form a helical membrane-spanning segment; that stretch reads GAYVFIIFTGFLITFLAFTFF. At 473–520 the chain is on the cytoplasmic side; that stretch reads KVPETRGRTFEDITRAFEGQAHGADRSGKDGVMGMNSIEPAKETTTNV. Residues 493-520 are disordered; that stretch reads AHGADRSGKDGVMGMNSIEPAKETTTNV.

It belongs to the major facilitator superfamily. Sugar transporter (TC 2.A.1.1) family. Glucose transporter subfamily. In terms of tissue distribution, mainly expressed in testis. Also expressed in small intestine, liver and kidney.

Its subcellular location is the cell membrane. It catalyses the reaction D-glucose(out) = D-glucose(in). The catalysed reaction is L-dehydroascorbate(out) = L-dehydroascorbate(in). Functionally, hexose transporter that can mediate the transport of glucose and dehydroascorbate across the cell membrane. The polypeptide is Solute carrier family 2, facilitated glucose transporter member 14 (Homo sapiens (Human)).